A 193-amino-acid chain; its full sequence is Holliday junction branch migration complex subunit RuvA (193 aa).

Positions 1–64 (MIGRIAGTLL…EDAHLLYGFL (64 aa)) are domain I. The domain II stretch occupies residues 65-139 (TPQERSTFRE…GKLGADLGPL (75 aa)). The segment at 139–143 (LAGAA) is flexible linker. A domain III region spans residues 144-193 (SPSDHAADILNALLALGYSEKEALAAIKNVPAGTGVSEGIKLSLKALSKA).

This sequence belongs to the RuvA family. As to quaternary structure, homotetramer. Forms an RuvA(8)-RuvB(12)-Holliday junction (HJ) complex. HJ DNA is sandwiched between 2 RuvA tetramers; dsDNA enters through RuvA and exits via RuvB. An RuvB hexamer assembles on each DNA strand where it exits the tetramer. Each RuvB hexamer is contacted by two RuvA subunits (via domain III) on 2 adjacent RuvB subunits; this complex drives branch migration. In the full resolvosome a probable DNA-RuvA(4)-RuvB(12)-RuvC(2) complex forms which resolves the HJ.

It is found in the cytoplasm. Its function is as follows. The RuvA-RuvB-RuvC complex processes Holliday junction (HJ) DNA during genetic recombination and DNA repair, while the RuvA-RuvB complex plays an important role in the rescue of blocked DNA replication forks via replication fork reversal (RFR). RuvA specifically binds to HJ cruciform DNA, conferring on it an open structure. The RuvB hexamer acts as an ATP-dependent pump, pulling dsDNA into and through the RuvAB complex. HJ branch migration allows RuvC to scan DNA until it finds its consensus sequence, where it cleaves and resolves the cruciform DNA. The polypeptide is Holliday junction branch migration complex subunit RuvA (Burkholderia thailandensis (strain ATCC 700388 / DSM 13276 / CCUG 48851 / CIP 106301 / E264)).